Here is a 419-residue protein sequence, read N- to C-terminus: 26S proteasome regulatory subunit 8 homolog A (419 aa).

A2 is modified (N-acetylalanine). 202-209 (GPPGTGKT) provides a ligand contact to ATP. K406 participates in a covalent cross-link: Glycyl lysine isopeptide (Lys-Gly) (interchain with G-Cter in ubiquitin).

The protein belongs to the AAA ATPase family. As to quaternary structure, component of the 19S regulatory particle (RP/PA700) base subcomplex of the 26S proteasome. The 26S proteasome is composed of a core protease (CP), known as the 20S proteasome, capped at one or both ends by the 19S regulatory particle (RP/PA700). The RP/PA700 complex is composed of at least 17 different subunits in two subcomplexes, the base and the lid, which form the portions proximal and distal to the 20S proteolytic core, respectively.

It is found in the cytoplasm. Its subcellular location is the nucleus. Its function is as follows. The 26S proteasome is involved in the ATP-dependent degradation of ubiquitinated proteins. The regulatory (or ATPase) complex confers ATP dependency and substrate specificity to the 26S complex. The protein is 26S proteasome regulatory subunit 8 homolog A (RPT6A) of Arabidopsis thaliana (Mouse-ear cress).